Here is a 188-residue protein sequence, read N- to C-terminus: uncharacterized protein (188 aa).

Transmembrane regions (helical) follow at residues 6–26 (MIVFMLLMVEIVSFVILSLPL), 43–63 (FAGRVKHVLKITIICILILFA), and 110–130 (ALFLSLVVNRYYLALEAMIAA).

The protein resides in the membrane. This is an uncharacterized protein from Schizosaccharomyces pombe (strain 972 / ATCC 24843) (Fission yeast).